A 378-amino-acid polypeptide reads, in one-letter code: 1-acyl-sn-glycerol-3-phosphate acyltransferase delta (378 aa).

A helical membrane pass occupies residues 11 to 31; it reads FLCHLIFCYVFIVSGLIINTI. The HXXXXD motif motif lies at 96-101; the sequence is HKFEID. The next 3 helical transmembrane spans lie at 125 to 145, 307 to 327, and 338 to 358; these read ELAYVPIIGWMWYFTEMVFCT, TLVNWLFWASMLLYPFFRFVI, and LASFVLVFFVASMGVRWMIGV.

The protein belongs to the 1-acyl-sn-glycerol-3-phosphate acyltransferase family.

The protein resides in the endoplasmic reticulum membrane. It catalyses the reaction a 1-acyl-sn-glycero-3-phosphate + an acyl-CoA = a 1,2-diacyl-sn-glycero-3-phosphate + CoA. The enzyme catalyses (4Z,7Z,10Z,13Z,16Z,19Z)-docosahexaenoyl-CoA + 1-hexadecanoyl-sn-glycero-3-phosphate = 1-hexadecanoyl-2-(4Z,7Z,10Z,13Z,16Z,19Z-docosahexaenoyl)-sn-glycero-3-phosphate + CoA. It carries out the reaction 1-octadecanoyl-sn-glycero-3-phosphate + (9Z,12Z)-octadecadienoyl-CoA = 1-octadecanoyl-2-(9Z,12Z-octadecadienoyl)-sn-glycero-3-phosphate + CoA. The catalysed reaction is 1-octadecanoyl-sn-glycero-3-phosphate + (4Z,7Z,10Z,13Z,16Z,19Z)-docosahexaenoyl-CoA = 1-octadecanoyl-2-(4Z,7Z,10Z,13Z,16Z,19Z-docosahexaenoyl)-sn-glycero-3-phosphate + CoA. It catalyses the reaction (4Z,7Z,10Z,13Z,16Z,19Z)-docosahexaenoyl-CoA + 1-(9Z-octadecenoyl)-sn-glycero-3-phosphate = 1-(9Z-octadecenoyl)-2-(4Z,7Z,10Z,13Z,16Z,19Z-docosahexaenoyl)-sn-glycero-3-phosphate + CoA. Its pathway is phospholipid metabolism; CDP-diacylglycerol biosynthesis; CDP-diacylglycerol from sn-glycerol 3-phosphate: step 2/3. In terms of biological role, converts 1-acyl-sn-glycerol-3-phosphate (lysophosphatidic acid or LPA) into 1,2-diacyl-sn-glycerol-3-phosphate (phosphatidic acid or PA) by incorporating an acyl moiety at the sn-2 position of the glycerol backbone. Exhibits high acyl-CoA specificity for polyunsaturated fatty acyl-CoA, especially docosahexaenoyl-CoA (22:6-CoA, DHA-CoA). This Bos taurus (Bovine) protein is 1-acyl-sn-glycerol-3-phosphate acyltransferase delta (AGPAT4).